Reading from the N-terminus, the 1368-residue chain is DNA-directed RNA polymerase subunit beta (1368 aa).

It belongs to the RNA polymerase beta chain family. As to quaternary structure, the RNAP catalytic core consists of 2 alpha, 1 beta, 1 beta' and 1 omega subunit. When a sigma factor is associated with the core the holoenzyme is formed, which can initiate transcription.

The catalysed reaction is RNA(n) + a ribonucleoside 5'-triphosphate = RNA(n+1) + diphosphate. DNA-dependent RNA polymerase catalyzes the transcription of DNA into RNA using the four ribonucleoside triphosphates as substrates. In Legionella pneumophila (strain Lens), this protein is DNA-directed RNA polymerase subunit beta.